Here is a 394-residue protein sequence, read N- to C-terminus: p-hydroxybenzoate hydroxylase (394 aa).

FAD contacts are provided by residues S13, E32, 42–47 (RIRAGV), and Q102. Substrate is bound by residues Y201, 212 to 214 (SQR), and Y222. D286 is an FAD binding site. Position 293 (P293) interacts with substrate. FAD is bound at residue 299-300 (LN).

The protein belongs to the aromatic-ring hydroxylase family. As to quaternary structure, homodimer. FAD is required as a cofactor.

It catalyses the reaction 4-hydroxybenzoate + NADPH + O2 + H(+) = 3,4-dihydroxybenzoate + NADP(+) + H2O. Its pathway is aromatic compound metabolism; benzoate degradation via hydroxylation; 3,4-dihydroxybenzoate from benzoate: step 2/2. In terms of biological role, catalyzes the incorporation of an atom of dioxygen into p-hydroxybenzoate (p-OHB) to form 3,4-dihydroxybenzoate (3,4DOHB). The reaction occurs in two parts: reduction of the flavin adenine dinucleotide (FAD) in the enzyme by reduced nicotinamide adenine dinucleotide phosphate (NADPH) in response to binding p-hydroxybenzoate to the enzyme and oxidation of reduced FAD with oxygen to form a hydroperoxide, which then oxygenates p-hydroxybenzoate. This Pseudomonas fluorescens protein is p-hydroxybenzoate hydroxylase (pobA).